The chain runs to 295 residues: Putative sugar uptake protein YxfA (295 aa).

The next 10 helical transmembrane spans lie at 4–26 (VLLA…KFGG), 33–50 (LGMT…FLFR), 54–72 (LTWQ…WAIG), 85–107 (VSVA…GVFA), 117–135 (FILG…YFSA), 156–178 (ALTY…AVLW), 188–206 (IILP…MGRF), 213–235 (YVYQ…LMAA), 241–263 (AIAF…LFLG), and 270–291 (ELVY…LAIV).

The protein belongs to the GRP transporter (TC 2.A.7.5) family.

The protein resides in the cell membrane. The polypeptide is Putative sugar uptake protein YxfA (yxfA) (Lactococcus lactis subsp. lactis (strain IL1403) (Streptococcus lactis)).